Reading from the N-terminus, the 455-residue chain is Probable multidrug resistance protein NorM (455 aa).

Helical transmembrane passes span 13–31, 51–73, 94–116, 131–150, 162–184, 194–216, 245–267, 282–304, 317–339, 352–369, 390–412, and 417–439; these read RLFA…QYAM, AIGS…ALSP, ALYL…VPFI, FHYL…YSVL, VTMW…LIYG, IGTG…FAAL, GVPI…LLVG, NFAS…AVGV, YCLI…LSAF, TVAA…FFQV, VFWS…LALL, and AFGY…SFRL.

This sequence belongs to the multi antimicrobial extrusion (MATE) (TC 2.A.66.1) family.

The protein resides in the cell membrane. Functionally, multidrug efflux pump. This Geobacillus kaustophilus (strain HTA426) protein is Probable multidrug resistance protein NorM (norM).